Here is a 156-residue protein sequence, read N- to C-terminus: MNIIEAAVATPDARVAITIARFNNFINDSLLDGAIDALKRIGQVKDENITVVWVPGAYELPLAAGALAKTGKYDAVIALGTVIRGGTAHFEYVAGGASNGLAHVAQEAEIPVAFGVLTTESIEQAIERAGTKAGNKGAEAALTALEMINVLKAIKA.

5-amino-6-(D-ribitylamino)uracil contacts are provided by residues Phe22, 57-59 (AYE), and 81-83 (TVI). (2S)-2-hydroxy-3-oxobutyl phosphate is bound at residue 86-87 (GT). The active-site Proton donor is His89. Phe114 serves as a coordination point for 5-amino-6-(D-ribitylamino)uracil. Arg128 serves as a coordination point for (2S)-2-hydroxy-3-oxobutyl phosphate.

The protein belongs to the DMRL synthase family. Forms an icosahedral capsid composed of 60 subunits, arranged as a dodecamer of pentamers.

The enzyme catalyses (2S)-2-hydroxy-3-oxobutyl phosphate + 5-amino-6-(D-ribitylamino)uracil = 6,7-dimethyl-8-(1-D-ribityl)lumazine + phosphate + 2 H2O + H(+). It functions in the pathway cofactor biosynthesis; riboflavin biosynthesis; riboflavin from 2-hydroxy-3-oxobutyl phosphate and 5-amino-6-(D-ribitylamino)uracil: step 1/2. In terms of biological role, catalyzes the formation of 6,7-dimethyl-8-ribityllumazine by condensation of 5-amino-6-(D-ribitylamino)uracil with 3,4-dihydroxy-2-butanone 4-phosphate. This is the penultimate step in the biosynthesis of riboflavin. This Enterobacter sp. (strain 638) protein is 6,7-dimethyl-8-ribityllumazine synthase.